The following is a 336-amino-acid chain: Dihydroorotate dehydrogenase (quinone) (336 aa).

FMN is bound by residues 62–66 and Thr86; that span reads AGLDK. Lys66 is a substrate binding site. 111 to 115 provides a ligand contact to substrate; the sequence is NRMGF. FMN-binding residues include Asn139 and Asn172. Residue Asn172 coordinates substrate. Residue Ser175 is the Nucleophile of the active site. Asn177 is a substrate binding site. Residues Lys217 and Thr245 each contribute to the FMN site. Substrate is bound at residue 246 to 247; sequence NT. Residues Gly268, Gly297, and 318–319 contribute to the FMN site; that span reads YS.

Belongs to the dihydroorotate dehydrogenase family. Type 2 subfamily. In terms of assembly, monomer. Requires FMN as cofactor.

The protein localises to the cell membrane. It catalyses the reaction (S)-dihydroorotate + a quinone = orotate + a quinol. The protein operates within pyrimidine metabolism; UMP biosynthesis via de novo pathway; orotate from (S)-dihydroorotate (quinone route): step 1/1. In terms of biological role, catalyzes the conversion of dihydroorotate to orotate with quinone as electron acceptor. This Shigella flexneri serotype 5b (strain 8401) protein is Dihydroorotate dehydrogenase (quinone).